A 391-amino-acid chain; its full sequence is Formate-dependent phosphoribosylglycinamide formyltransferase (391 aa).

N(1)-(5-phospho-beta-D-ribosyl)glycinamide is bound by residues Glu20–Leu21 and Glu80. ATP contacts are provided by residues Arg112, Lys153, Ser158 to Gln163, Glu193 to Val196, and Glu201. The region spanning Arg117–Leu306 is the ATP-grasp domain. Mg(2+) contacts are provided by Glu265 and Glu277. N(1)-(5-phospho-beta-D-ribosyl)glycinamide contacts are provided by residues Asp284, Lys354, and Arg361–Arg362.

This sequence belongs to the PurK/PurT family. As to quaternary structure, homodimer.

It carries out the reaction N(1)-(5-phospho-beta-D-ribosyl)glycinamide + formate + ATP = N(2)-formyl-N(1)-(5-phospho-beta-D-ribosyl)glycinamide + ADP + phosphate + H(+). It participates in purine metabolism; IMP biosynthesis via de novo pathway; N(2)-formyl-N(1)-(5-phospho-D-ribosyl)glycinamide from N(1)-(5-phospho-D-ribosyl)glycinamide (formate route): step 1/1. Involved in the de novo purine biosynthesis. Catalyzes the transfer of formate to 5-phospho-ribosyl-glycinamide (GAR), producing 5-phospho-ribosyl-N-formylglycinamide (FGAR). Formate is provided by PurU via hydrolysis of 10-formyl-tetrahydrofolate. In Shewanella putrefaciens (strain CN-32 / ATCC BAA-453), this protein is Formate-dependent phosphoribosylglycinamide formyltransferase.